An 861-amino-acid chain; its full sequence is Leucine--tRNA ligase (861 aa).

A 'HIGH' region motif is present at residues 42–52 (PYPSGRIHMGH). Residues 623 to 627 (KMSKS) carry the 'KMSKS' region motif. Lys-626 contributes to the ATP binding site.

This sequence belongs to the class-I aminoacyl-tRNA synthetase family.

The protein localises to the cytoplasm. The enzyme catalyses tRNA(Leu) + L-leucine + ATP = L-leucyl-tRNA(Leu) + AMP + diphosphate. This Caulobacter sp. (strain K31) protein is Leucine--tRNA ligase.